The following is a 191-amino-acid chain: Imidazoleglycerol-phosphate dehydratase (191 aa).

It belongs to the imidazoleglycerol-phosphate dehydratase family.

The protein localises to the cytoplasm. It carries out the reaction D-erythro-1-(imidazol-4-yl)glycerol 3-phosphate = 3-(imidazol-4-yl)-2-oxopropyl phosphate + H2O. It participates in amino-acid biosynthesis; L-histidine biosynthesis; L-histidine from 5-phospho-alpha-D-ribose 1-diphosphate: step 6/9. The polypeptide is Imidazoleglycerol-phosphate dehydratase (Thermodesulfovibrio yellowstonii (strain ATCC 51303 / DSM 11347 / YP87)).